Here is a 421-residue protein sequence, read N- to C-terminus: ATP-dependent RNA helicase RhlB (421 aa).

The Q motif motif lies at 9–37; that stretch reads QKFSDFALHPQVVEALEKKGFYNCTPIQA. Residues 40 to 219 form the Helicase ATP-binding domain; sequence LPLTLAGRDV…FEQMNNAEYV (180 aa). ATP is bound at residue 53–60; the sequence is AQTGTGKT. The DEAD box motif lies at 165–168; sequence DEAD. The Helicase C-terminal domain maps to 245-390; sequence RLLQTLIEEE…VSKYNPEALM (146 aa). The segment at 396-421 is disordered; that stretch reads PLRLTRSRPGNGPRRAGAPRNRRRSG. Residues 402–414 show a composition bias toward low complexity; sequence SRPGNGPRRAGAP.

This sequence belongs to the DEAD box helicase family. RhlB subfamily. As to quaternary structure, component of the RNA degradosome, which is a multiprotein complex involved in RNA processing and mRNA degradation.

The protein localises to the cytoplasm. It carries out the reaction ATP + H2O = ADP + phosphate + H(+). Its function is as follows. DEAD-box RNA helicase involved in RNA degradation. Has RNA-dependent ATPase activity and unwinds double-stranded RNA. This is ATP-dependent RNA helicase RhlB from Salmonella paratyphi A (strain AKU_12601).